The chain runs to 241 residues: ATP synthase subunit a (241 aa).

The next 5 helical transmembrane spans lie at 30 to 50, 89 to 109, 128 to 148, 193 to 213, and 214 to 234; these read GQVFLSSWILIGILLAVVLVG, LPFIGTLFLFIFVSNWGGALI, INTTVAMALLVSLAYFYAGLS, LAVGVLVYLVPLIVPLPVMLL, and GLFTSAIQALIFATLASFYIG.

This sequence belongs to the ATPase A chain family. F-type ATPases have 2 components, CF(1) - the catalytic core - and CF(0) - the membrane proton channel. CF(1) has five subunits: alpha(3), beta(3), gamma(1), delta(1), epsilon(1). CF(0) has four main subunits: a, b, b' and c.

It is found in the cellular thylakoid membrane. Functionally, key component of the proton channel; it plays a direct role in the translocation of protons across the membrane. The chain is ATP synthase subunit a from Synechococcus sp. (strain CC9605).